Here is a 118-residue protein sequence, read N- to C-terminus: MYRNIVFYLILLCLFISVVMKSFEVIRTIANVICFIFVLLYFKDEMKTYSRKALAILSICFLFLVGICAFIILQGQTLMKRHLFFTGLETIAGILLIIVSLSICTFILRKISNRLKRM.

Transmembrane regions (helical) follow at residues 5–20 (IVFYLILLCLFISVVM), 25–42 (VIRTIANVICFIFVLLYF), 53–73 (ALAILSICFLFLVGICAFIIL), and 83–103 (LFFTGLETIAGILLIIVSLSI).

The protein localises to the cell membrane. This is an uncharacterized protein from Bacillus subtilis (strain 168).